We begin with the raw amino-acid sequence, 50 residues long: U2-ctenitoxin-Pk1a (50 aa).

5 cysteine pairs are disulfide-bonded: Cys1-Cys15, Cys8-Cys21, Cys12-Cys47, Cys14-Cys31, and Cys23-Cys29.

In terms of tissue distribution, expressed by the venom gland.

The protein localises to the secreted. Insecticidal neurotoxin that reversibly inhibits the N-methyl-D-aspartate (NMDA)-subtype of ionotropic glutamate receptor (GRIN) and inhibits inactivation of insect sodium channels (Nav). In vivo, is highly toxic to insects. This is U2-ctenitoxin-Pk1a from Phoneutria keyserlingi (Brazilian wandering spider).